A 415-amino-acid chain; its full sequence is Serine hydroxymethyltransferase (415 aa).

(6S)-5,6,7,8-tetrahydrofolate-binding positions include Leu117 and Gly121–Leu123. An N6-(pyridoxal phosphate)lysine modification is found at Lys226.

It belongs to the SHMT family. As to quaternary structure, homodimer. The cofactor is pyridoxal 5'-phosphate.

It is found in the cytoplasm. The enzyme catalyses (6R)-5,10-methylene-5,6,7,8-tetrahydrofolate + glycine + H2O = (6S)-5,6,7,8-tetrahydrofolate + L-serine. The protein operates within one-carbon metabolism; tetrahydrofolate interconversion. Its pathway is amino-acid biosynthesis; glycine biosynthesis; glycine from L-serine: step 1/1. Functionally, catalyzes the reversible interconversion of serine and glycine with tetrahydrofolate (THF) serving as the one-carbon carrier. This reaction serves as the major source of one-carbon groups required for the biosynthesis of purines, thymidylate, methionine, and other important biomolecules. Also exhibits THF-independent aldolase activity toward beta-hydroxyamino acids, producing glycine and aldehydes, via a retro-aldol mechanism. The polypeptide is Serine hydroxymethyltransferase (Leptospira interrogans serogroup Icterohaemorrhagiae serovar copenhageni (strain Fiocruz L1-130)).